A 321-amino-acid chain; its full sequence is Probable 3-hydroxyisobutyrate dehydrogenase, mitochondrial (321 aa).

NAD(+) is bound by residues Lys23 to Asp52, Leu86 to Pro87, and Thr117. Lys192 is an active-site residue. Lys267 serves as a coordination point for NAD(+).

This sequence belongs to the HIBADH-related family. 3-hydroxyisobutyrate dehydrogenase subfamily.

It localises to the mitochondrion. The enzyme catalyses 3-hydroxy-2-methylpropanoate + NAD(+) = 2-methyl-3-oxopropanoate + NADH + H(+). The protein operates within amino-acid degradation; L-valine degradation. This is Probable 3-hydroxyisobutyrate dehydrogenase, mitochondrial (hibA) from Dictyostelium discoideum (Social amoeba).